The sequence spans 88 residues: Putative membrane protein insertion efficiency factor (88 aa).

It belongs to the UPF0161 family.

The protein localises to the cell inner membrane. Its function is as follows. Could be involved in insertion of integral membrane proteins into the membrane. This Rickettsia canadensis (strain McKiel) protein is Putative membrane protein insertion efficiency factor.